Here is a 595-residue protein sequence, read N- to C-terminus: Chaperone protein HscA homolog (595 aa).

The protein belongs to the heat shock protein 70 family.

Chaperone involved in the maturation of iron-sulfur cluster-containing proteins. Has a low intrinsic ATPase activity which is markedly stimulated by HscB. The polypeptide is Chaperone protein HscA homolog (Rickettsia peacockii (strain Rustic)).